The primary structure comprises 299 residues: MVKYGLFLGCNISFNRPDVEVSMRSIFPALGIELDDLVGQSCCPTWGTMPSVDIVGWCAVAARNLALGEEKGIDLMTACNSCYGSLNEARHKMLTNPEIHRKVNEILATIGKRYEGKAKCRHVAWVLYKDVGLEKLKESIKYTLDGITVAVQPGCHFLWPSEVYPDKEEDPFNPKVLRELCEALGAEAPYYTKLIECCGMGALRSTDPEKSFKLVKEKMENIKEEIDADLIVTTCSSCLIQLDDAQERLRKEGKINFSIPVLHLVQVIALCMGFDPEKVAGICVTPRDEIIKRILENKR.

Belongs to the HdrB family. The heterodisulfide reductase is composed of three subunits; HdlA, HdlB and HdlC. It forms a complex with the F420-non-reducing hydrogenase (Mvh), which provides the reducing equivalents to the heterodisulfide reductase.

The protein localises to the cytoplasm. Functionally, has oxidoreductase activity. The Hdl and Mvh subunits may together mediate electron transfer from hydrogen to an unidentified electron acceptor on the cytoplasmic side of the membrane. The sequence is that of Heterodisulfide reductase subunit B-like protein (hdlB) from Archaeoglobus profundus (strain DSM 5631 / JCM 9629 / NBRC 100127 / Av18).